Reading from the N-terminus, the 217-residue chain is 3,4-dihydroxy-2-butanone 4-phosphate synthase (217 aa).

D-ribulose 5-phosphate is bound by residues Arg-37 to Glu-38, Asp-42, Arg-150 to Thr-154, and Glu-174. A Mg(2+)-binding site is contributed by Glu-38. Residue His-153 participates in Mg(2+) binding.

Belongs to the DHBP synthase family. Homodimer. Mg(2+) is required as a cofactor. The cofactor is Mn(2+).

It catalyses the reaction D-ribulose 5-phosphate = (2S)-2-hydroxy-3-oxobutyl phosphate + formate + H(+). Its pathway is cofactor biosynthesis; riboflavin biosynthesis; 2-hydroxy-3-oxobutyl phosphate from D-ribulose 5-phosphate: step 1/1. Its function is as follows. Catalyzes the conversion of D-ribulose 5-phosphate to formate and 3,4-dihydroxy-2-butanone 4-phosphate. This Citrobacter koseri (strain ATCC BAA-895 / CDC 4225-83 / SGSC4696) protein is 3,4-dihydroxy-2-butanone 4-phosphate synthase.